We begin with the raw amino-acid sequence, 338 residues long: Galactinol synthase 2 (338 aa).

Residue Lys105 is part of the active site. Residues Asp121, Asp123, and His258 each contribute to the Mn(2+) site.

It belongs to the glycosyltransferase 8 family. Galactosyltransferase subfamily. It depends on a divalent metal cation as a cofactor.

It localises to the cytoplasm. The catalysed reaction is myo-inositol + UDP-alpha-D-galactose = alpha-D-galactosyl-(1-&gt;3)-1D-myo-inositol + UDP + H(+). In terms of biological role, galactinol synthase involved in the biosynthesis of raffinose family oligosaccharides (RFOs) that function as osmoprotectants. May promote plant stress tolerance. In Solanum lycopersicum (Tomato), this protein is Galactinol synthase 2 (GOLS2).